We begin with the raw amino-acid sequence, 230 residues long: Ribonuclease HII (230 aa).

In terms of domain architecture, RNase H type-2 spans 28–217 (FRIAGIDEAG…VKEHLPSQPD (190 aa)). 3 residues coordinate a divalent metal cation: Asp34, Glu35, and Asp126. The tract at residues 211 to 230 (HLPSQPDCDTAGPSTGLFSF) is disordered.

The protein belongs to the RNase HII family. The cofactor is Mn(2+). Mg(2+) is required as a cofactor.

The protein localises to the cytoplasm. It catalyses the reaction Endonucleolytic cleavage to 5'-phosphomonoester.. In terms of biological role, endonuclease that specifically degrades the RNA of RNA-DNA hybrids. The chain is Ribonuclease HII from Geobacter sp. (strain M21).